Reading from the N-terminus, the 63-residue chain is Large ribosomal subunit protein bL32 (63 aa).

Residues 1 to 45 (MAVQQNKKSRSRRDMRRSHDALTKPTLSVDPTTGETHLRHHMTPD) form a disordered region. Residues 7–16 (KKSRSRRDMR) are compositionally biased toward basic residues. Polar residues predominate over residues 25–35 (PTLSVDPTTGE).

It belongs to the bacterial ribosomal protein bL32 family.

In Legionella pneumophila (strain Paris), this protein is Large ribosomal subunit protein bL32.